Reading from the N-terminus, the 486-residue chain is Outer dynein arm-docking complex subunit 4 (486 aa).

TPR repeat units follow at residues 14–47 (FTTYMAEGDQLFQRGEYVKAVESFTTALTLQPDD), 49–81 (NCLVSRSRCYVKLGDAENALKDAESSLKDNKNY), and 82–115 (FKGLYQKAEALYTMGDFEFALVYYHRGHKLRPEL). The interval 153-180 (GVHPQNLNPSNKKESKKHSKKTDKGEKT) is disordered. TPR repeat units lie at residues 314–347 (GNLHSYIGNALMDLGNMDRALHHHEKDLELAKKC), 354–387 (SRALDNIGRVYARIGKFQQAIEVWEKKLPLACGG), 391–424 (AWLFHEIGRCYLELKRYMEARDYGSRSLMAADDI), and 431–464 (LNASVLMAQAELKLSNYKASVLHFERALERAKLL).

In terms of assembly, component of the outer dynein arm-docking complex along with ODAD1, ODAD2 and ODAD3.

Its subcellular location is the cytoplasm. It is found in the cytoskeleton. The protein resides in the cilium axoneme. Functionally, component of the outer dynein arm-docking complex (ODA-DC) that mediates outer dynein arms (ODA) binding onto the doublet microtubule. Plays an essential role for the assembly of ODA-DC and in the docking of ODA in ciliary axoneme. This is Outer dynein arm-docking complex subunit 4 (odad4) from Danio rerio (Zebrafish).